We begin with the raw amino-acid sequence, 359 residues long: Cytochrome c oxidase subunit 2 (359 aa).

The signal sequence occupies residues 1–28 (MEQQNKRGLKRKALLGGVLGSGGLAMAG). The N-palmitoyl cysteine moiety is linked to residue Cys-29. Cys-29 carries S-diacylglycerol cysteine lipidation. 2 consecutive transmembrane segments (helical) span residues 64–84 (VWVAAWIIGIIMWGLMLTAIF) and 107–127 (VPLELVLTIVPIIIVMVLFFF). Residues His-244, Cys-285, Glu-287, Cys-289, His-293, and Met-296 each coordinate Cu cation. Residues 338-359 (STAPFVSDRTGTRDGENFQTPA) are disordered.

It belongs to the cytochrome c oxidase subunit 2 family. In terms of assembly, associates with subunits I, III and IV to form cytochrome c oxidase. The cofactor is binuclear copper center (CuA).

Its subcellular location is the cell membrane. The catalysed reaction is 4 Fe(II)-[cytochrome c] + O2 + 8 H(+)(in) = 4 Fe(III)-[cytochrome c] + 2 H2O + 4 H(+)(out). In terms of biological role, subunits I and II form the functional core of the enzyme complex. Electrons originating in cytochrome c are transferred via heme a and Cu(A) to the binuclear center formed by heme a3 and Cu(B). In Corynebacterium efficiens (strain DSM 44549 / YS-314 / AJ 12310 / JCM 11189 / NBRC 100395), this protein is Cytochrome c oxidase subunit 2 (ctaC).